A 450-amino-acid polypeptide reads, in one-letter code: Putative nucleolar protein 5-3 (450 aa).

Residues 252–370 (IAPNLTALVG…LEARLRNLEG (119 aa)) enclose the Nop domain. Positions 375–423 (ACEEEEEVNDKDTKKEADDEEEPKTEECSKKRKKEAELETVEDPAKKSK) are disordered. Positions 399 to 423 (TEECSKKRKKEAELETVEDPAKKSK) are enriched in basic and acidic residues.

The protein belongs to the NOP5/NOP56 family.

The protein localises to the nucleus. The protein resides in the nucleolus. Required for 60S ribosomal subunit biogenesis. The sequence is that of Putative nucleolar protein 5-3 (NOP5-3) from Arabidopsis thaliana (Mouse-ear cress).